A 228-amino-acid polypeptide reads, in one-letter code: UPF0758 protein Reut_A2732 (228 aa).

One can recognise an MPN domain in the interval 102–224 (GLDSPAAVRS…VHSFAEHGEL (123 aa)). Zn(2+)-binding residues include His173, His175, and Asp186. The short motif at 173–186 (HNHPSGCCTPSQSD) is the JAMM motif element.

This sequence belongs to the UPF0758 family.

In Cupriavidus pinatubonensis (strain JMP 134 / LMG 1197) (Cupriavidus necator (strain JMP 134)), this protein is UPF0758 protein Reut_A2732.